Consider the following 472-residue polypeptide: Tryptophan--tRNA ligase, cytoplasmic (472 aa).

One can recognise a WHEP-TRS domain in the interval 9–65 (SPLELFNSIATQGELVRSLKAGNASKDEIDSAVKMLLSLKMSYKAAMGEDYKANCPP). Lysine 155 is subject to N6-succinyllysine. The 'HIGH' region signature appears at 165-174 (PSSEAMHVGH). Positions 350-354 (KMSAS) match the 'KMSKS' region motif. Residue serine 352 is modified to Phosphoserine.

The protein belongs to the class-I aminoacyl-tRNA synthetase family. In terms of assembly, homodimer. Interacts with oxidized form of GAPDH. Proteolytic cleavage generates 2 forms; T1-TrpRS and T2-TrpRS.

The protein resides in the cytoplasm. It catalyses the reaction tRNA(Trp) + L-tryptophan + ATP = L-tryptophyl-tRNA(Trp) + AMP + diphosphate + H(+). Catalyzes the attachment of tryptophan to tRNA(Trp) in a two-step reaction: tryptophan is first activated by ATP to form Trp-AMP and then transferred to the acceptor end of the tRNA(Trp). Could also possess an angiostatic activity. The polypeptide is Tryptophan--tRNA ligase, cytoplasmic (WARS1) (Pongo abelii (Sumatran orangutan)).